Reading from the N-terminus, the 357-residue chain is tRNA-specific 2-thiouridylase MnmA (357 aa).

ATP contacts are provided by residues 10 to 17 (GISGGVDS) and Ile-36. The active-site Nucleophile is Cys-98. A disulfide bridge connects residues Cys-98 and Cys-194. Gly-122 lines the ATP pocket. Positions 144–146 (KDQ) are interaction with tRNA. Cys-194 functions as the Cysteine persulfide intermediate in the catalytic mechanism. The tract at residues 303 to 304 (RY) is interaction with tRNA.

The protein belongs to the MnmA/TRMU family.

It localises to the cytoplasm. It carries out the reaction S-sulfanyl-L-cysteinyl-[protein] + uridine(34) in tRNA + AH2 + ATP = 2-thiouridine(34) in tRNA + L-cysteinyl-[protein] + A + AMP + diphosphate + H(+). Its function is as follows. Catalyzes the 2-thiolation of uridine at the wobble position (U34) of tRNA, leading to the formation of s(2)U34. The polypeptide is tRNA-specific 2-thiouridylase MnmA (Chlorobium phaeovibrioides (strain DSM 265 / 1930) (Prosthecochloris vibrioformis (strain DSM 265))).